Reading from the N-terminus, the 171-residue chain is 16S rRNA aminocarboxypropyltransferase (171 aa).

The S-adenosyl-L-methionine site is built by Thr-17, Leu-67, Leu-90, and Thr-109.

Belongs to the TDD superfamily. TSR3 family.

The protein resides in the cytoplasm. The catalysed reaction is an N(1)-methylpseudouridine in rRNA + S-adenosyl-L-methionine = N(1)-methyl-N(3)-[(3S)-3-amino-3-carboxypropyl]pseudouridine in rRNA + S-methyl-5'-thioadenosine + H(+). In terms of biological role, aminocarboxypropyltransferase that catalyzes the aminocarboxypropyl transfer on pseudouridine corresponding to position 914 in M.jannaschii 16S rRNA. It constitutes the last step in biosynthesis of the hypermodified N1-methyl-N3-(3-amino-3-carboxypropyl) pseudouridine (m1acp3-Psi). This chain is 16S rRNA aminocarboxypropyltransferase, found in Methanobrevibacter smithii (strain ATCC 35061 / DSM 861 / OCM 144 / PS).